Reading from the N-terminus, the 493-residue chain is Glutamate--tRNA ligase (493 aa).

The short motif at 10 to 20 (PSPTGDPHVGT) is the 'HIGH' region element. Residues C107, C109, C134, and H136 each contribute to the Zn(2+) site. The 'KMSKS' region signature appears at 251-255 (KLSKR). K254 is a binding site for ATP.

Belongs to the class-I aminoacyl-tRNA synthetase family. Glutamate--tRNA ligase type 1 subfamily. As to quaternary structure, monomer. It depends on Zn(2+) as a cofactor.

Its subcellular location is the cytoplasm. The catalysed reaction is tRNA(Glu) + L-glutamate + ATP = L-glutamyl-tRNA(Glu) + AMP + diphosphate. In terms of biological role, catalyzes the attachment of glutamate to tRNA(Glu) in a two-step reaction: glutamate is first activated by ATP to form Glu-AMP and then transferred to the acceptor end of tRNA(Glu). The chain is Glutamate--tRNA ligase from Stutzerimonas stutzeri (strain A1501) (Pseudomonas stutzeri).